Consider the following 323-residue polypeptide: uncharacterized protein (323 aa).

Disordered regions lie at residues 185–214 (AELM…GSSW) and 271–294 (GNII…YEKL).

This sequence belongs to the IGBP1/TAP42 family.

This is an uncharacterized protein from Schizosaccharomyces pombe (strain 972 / ATCC 24843) (Fission yeast).